The following is a 660-amino-acid chain: Arginine--tRNA ligase, cytoplasmic (660 aa).

N-acetylmethionine is present on Met1. Residues 1–72 are could be involved in the assembly of the multisynthetase complex; sequence MDGLVAQCSA…QEERRKPTKN (72 aa). L-arginine-binding positions include 200–202, His211, Tyr384, Asp388, and Gln412; that span reads SPN. A 'HIGH' region motif is present at residues 201–212; sequence PNIAKEMHVGHL. Positions 529–543 are interaction with tRNA; it reads NTAAYLLYAFTRIRS.

Belongs to the class-I aminoacyl-tRNA synthetase family. Interacts (via N-terminus) with AIMP1 (via N-terminus); this stimulates its catalytic activity. Interacts (via N-terminus) with LARS2 (via C-terminus). Monomer. Part of a multisubunit complex that groups tRNA ligases for Arg (RARS1), Asp (DARS1), Gln (QARS1), Ile (IARS1), Leu (LARS1), Lys (KARS1), Met (MARS1) the bifunctional ligase for Glu and Pro (EPRS1) and the auxiliary subunits AIMP1/p43, AIMP2/p38 and EEF1E1/p18. Interacts with QARS1. Part of a complex composed of RARS1, QARS1 and AIMP1.

The protein localises to the cytoplasm. Its subcellular location is the cytosol. It catalyses the reaction tRNA(Arg) + L-arginine + ATP = L-arginyl-tRNA(Arg) + AMP + diphosphate. In terms of biological role, forms part of a macromolecular complex that catalyzes the attachment of specific amino acids to cognate tRNAs during protein synthesis. Modulates the secretion of AIMP1 and may be involved in generation of the inflammatory cytokine EMAP2 from AIMP1. The chain is Arginine--tRNA ligase, cytoplasmic (Rars1) from Mus musculus (Mouse).